The sequence spans 677 residues: Bargin (677 aa).

Low complexity-rich tracts occupy residues 1-13 and 29-39; these read MDRGLPGPATPAV and APHAAAGPDGQ. 2 disordered regions span residues 1 to 39 and 168 to 190; these read MDRGLPGPATPAVTPQPPARPQDDEEAAAPHAAAGPDGQ and SQATKNSGSSQGLGGSPGSHSHT. Positions 25–270 constitute a BAR domain; that stretch reads EEAAAPHAAA…RENHGQADHS (246 aa). Phosphoserine occurs at positions 183, 270, and 272. One can recognise a Rho-GAP domain in the interval 284-477; the sequence is VSLATHLQEL…ALIQSADTLF (194 aa). The interval 504–577 is disordered; the sequence is SEELPSTAVP…DMARRSTGSL (74 aa). Residues 516–530 show a composition bias toward pro residues; the sequence is ATTPAPAPAPAPAPA. Phosphoserine is present on residues Ser-552 and Ser-558. The segment at 574-677 is mediates non-covalent binding of poly-ubiquitin chains; that stretch reads TGSLAAAVET…IADLTEGLED (104 aa).

As to expression, expressed in brain (at protein level).

The protein resides in the cell membrane. It localises to the cytoplasm. Its subcellular location is the cytosol. GTPase activating protein (GAP) which specifically converts GTP-bound RAC1 and CDC42 in their inactive GDP-bound form. The GAP activity is enhanced by the non-covalent binding of K-29 and K-48 polyubiquitin chains. This chain is Bargin, found in Homo sapiens (Human).